The following is a 176-amino-acid chain: Glutathione-regulated potassium-efflux system ancillary protein KefF (176 aa).

FMN contacts are provided by residues H8, 14–17 (SHAN), 65–68 (MQWY), and 105–108 (TTGG).

Belongs to the NAD(P)H dehydrogenase (quinone) family. KefF subfamily. Homodimer. Interacts with KefC. The cofactor is FMN.

It localises to the cell inner membrane. The catalysed reaction is a quinone + NADH + H(+) = a quinol + NAD(+). The enzyme catalyses a quinone + NADPH + H(+) = a quinol + NADP(+). In terms of biological role, regulatory subunit of a potassium efflux system that confers protection against electrophiles. Required for full activity of KefC. Shows redox enzymatic activity, but this enzymatic activity is not required for activation of KefC. This is Glutathione-regulated potassium-efflux system ancillary protein KefF from Salmonella dublin (strain CT_02021853).